The sequence spans 523 residues: Siroheme synthase (523 aa).

The segment at 1-203 is precorrin-2 dehydrogenase /sirohydrochlorin ferrochelatase; that stretch reads MNTFPLFFKL…GNENEAIAQL (203 aa). Residues 22–23 and 43–44 each bind NAD(+); these read DV and PS. At S128 the chain carries Phosphoserine. The segment at 231 to 523 is uroporphyrinogen-III C-methyltransferase; sequence GEVYIVGAGP…DGGLEQLVID (293 aa). An S-adenosyl-L-methionine-binding site is contributed by P240. Catalysis depends on D263, which acts as the Proton acceptor. The Proton donor role is filled by K285. S-adenosyl-L-methionine is bound by residues 316 to 318, I321, 346 to 347, M398, and A427; these read GGD and TA.

It in the N-terminal section; belongs to the precorrin-2 dehydrogenase / sirohydrochlorin ferrochelatase family. In the C-terminal section; belongs to the precorrin methyltransferase family.

The catalysed reaction is uroporphyrinogen III + 2 S-adenosyl-L-methionine = precorrin-2 + 2 S-adenosyl-L-homocysteine + H(+). It catalyses the reaction precorrin-2 + NAD(+) = sirohydrochlorin + NADH + 2 H(+). It carries out the reaction siroheme + 2 H(+) = sirohydrochlorin + Fe(2+). It participates in cofactor biosynthesis; adenosylcobalamin biosynthesis; precorrin-2 from uroporphyrinogen III: step 1/1. It functions in the pathway cofactor biosynthesis; adenosylcobalamin biosynthesis; sirohydrochlorin from precorrin-2: step 1/1. The protein operates within porphyrin-containing compound metabolism; siroheme biosynthesis; precorrin-2 from uroporphyrinogen III: step 1/1. Its pathway is porphyrin-containing compound metabolism; siroheme biosynthesis; siroheme from sirohydrochlorin: step 1/1. It participates in porphyrin-containing compound metabolism; siroheme biosynthesis; sirohydrochlorin from precorrin-2: step 1/1. Multifunctional enzyme that catalyzes the SAM-dependent methylations of uroporphyrinogen III at position C-2 and C-7 to form precorrin-2 via precorrin-1. Then it catalyzes the NAD-dependent ring dehydrogenation of precorrin-2 to yield sirohydrochlorin. Finally, it catalyzes the ferrochelation of sirohydrochlorin to yield siroheme. This is Siroheme synthase from Psychrobacter cryohalolentis (strain ATCC BAA-1226 / DSM 17306 / VKM B-2378 / K5).